The following is a 315-amino-acid chain: Methionyl-tRNA formyltransferase (315 aa).

Residue 113–116 participates in (6S)-5,6,7,8-tetrahydrofolate binding; the sequence is SILP.

Belongs to the Fmt family.

The catalysed reaction is L-methionyl-tRNA(fMet) + (6R)-10-formyltetrahydrofolate = N-formyl-L-methionyl-tRNA(fMet) + (6S)-5,6,7,8-tetrahydrofolate + H(+). Functionally, attaches a formyl group to the free amino group of methionyl-tRNA(fMet). The formyl group appears to play a dual role in the initiator identity of N-formylmethionyl-tRNA by promoting its recognition by IF2 and preventing the misappropriation of this tRNA by the elongation apparatus. This chain is Methionyl-tRNA formyltransferase, found in Aliivibrio fischeri (strain ATCC 700601 / ES114) (Vibrio fischeri).